Consider the following 578-residue polypeptide: uncharacterized protein (578 aa).

This is an uncharacterized protein from Eikenella corrodens.